A 627-amino-acid chain; its full sequence is Alpha-terpineol synthase, chloroplastic (627 aa).

A chloroplast-targeting transit peptide spans 1 to 53; sequence MAGITGVMNMKLAARPSSGRHSRGCRPAVVPSAGKQMLLVRRHPPGSASWPTR. The disordered stretch occupies residues 13 to 90; that stretch reads AARPSSGRHS…EDRASRNTSS (78 aa). The (2E)-geranyl diphosphate site is built by Arg-339, Asp-376, Asp-380, Arg-518, and Asp-521. Mg(2+)-binding residues include Asp-376 and Asp-380. A DDXXD motif motif is present at residues 376–380; that stretch reads DDTYD. The Mg(2+) site is built by Asp-521, Ser-525, and Glu-529.

Belongs to the terpene synthase family. Tpsb subfamily. In terms of assembly, monomer. The cofactor is Mg(2+). It depends on Mn(2+) as a cofactor. Expressed in seedling leaf sheaths and roots.

It localises to the plastid. It is found in the chloroplast. The catalysed reaction is (2E)-geranyl diphosphate + H2O = (S)-alpha-terpineol + diphosphate. It carries out the reaction (2E)-geranyl diphosphate = (4S)-limonene + diphosphate. The enzyme catalyses (2E)-geranyl diphosphate = gamma-terpinene + diphosphate. It catalyses the reaction (2E)-geranyl diphosphate = beta-myrcene + diphosphate. The catalysed reaction is (2E)-geranyl diphosphate = terpinolene + diphosphate. It carries out the reaction (2E)-geranyl diphosphate + H2O = 4-terpineol + diphosphate. It functions in the pathway secondary metabolite biosynthesis; terpenoid biosynthesis. In terms of biological role, component of the volatile terpenes biosynthesis pathways. Mediates the synthesis of a blend of monoterpenes. Converts mainly geranyl diphosphate to alpha-terpineol. Also triggers the biosynthesis of minor monoterpenes including limonene, gamma-terpinene, beta-myrcene, terpinolene and 4-terpineol. This chain is Alpha-terpineol synthase, chloroplastic, found in Zea mays (Maize).